The primary structure comprises 38 residues: Large ribosomal subunit protein bL36 (38 aa).

It belongs to the bacterial ribosomal protein bL36 family.

This Chloroflexus aurantiacus (strain ATCC 29366 / DSM 635 / J-10-fl) protein is Large ribosomal subunit protein bL36.